A 414-amino-acid polypeptide reads, in one-letter code: YYTPDYKTKDTDILAAFRMTPQPGVPAEEAGAAVAAESSTGTWTTVWTDGLTSLDRYKGRCYDIEPVAGEENQYIAYVAYPLDLFEEGSVTNLFTSIVGNVFGFKALRALRLEDLRIPPAYSKTFIGPPHGIQVERDKLNKYGRPLLGCTIKPKLGLSAKNYGRAVYECLRGGLDFTKDDENVNSQPFMRWRDRFLFVAEALFKSQAETGEIKGHYLNATAGTCEEMLKRAVFARELGAPIVMHDYLTGGFTANTSLAFYCRDNGLLLHIHRAMHAVIDRQRNHGMHFRVLAKALRMSGGDHIHAGTVVGKLEGEREVTLGFVDLLRDDYIEKDRCRGIYFTQDWVSMPGVLPVASGGIHVWHMPALTEIFGDDSVLQFGGGTLGHPWGNAPGAVANRVALEACVQARNEGPNL.

Residues Asn-100 and Thr-150 each coordinate substrate. The active-site Proton acceptor is the Lys-152. A substrate-binding site is contributed by Lys-154. Mg(2+) is bound by residues Lys-178, Asp-180, and Glu-181. N6-carboxylysine is present on Lys-178. His-271 serves as the catalytic Proton acceptor. Substrate contacts are provided by Arg-272, His-304, and Ser-356.

The protein belongs to the RuBisCO large chain family. Type I subfamily. Heterohexadecamer of 8 large chains and 8 small chains; disulfide-linked. The disulfide link is formed within the large subunit homodimers. Mg(2+) is required as a cofactor. Post-translationally, the disulfide bond which can form in the large chain dimeric partners within the hexadecamer appears to be associated with oxidative stress and protein turnover.

The protein resides in the plastid. Its subcellular location is the chloroplast. The catalysed reaction is 2 (2R)-3-phosphoglycerate + 2 H(+) = D-ribulose 1,5-bisphosphate + CO2 + H2O. The enzyme catalyses D-ribulose 1,5-bisphosphate + O2 = 2-phosphoglycolate + (2R)-3-phosphoglycerate + 2 H(+). In terms of biological role, ruBisCO catalyzes two reactions: the carboxylation of D-ribulose 1,5-bisphosphate, the primary event in carbon dioxide fixation, as well as the oxidative fragmentation of the pentose substrate in the photorespiration process. Both reactions occur simultaneously and in competition at the same active site. This Blechnopsis orientalis (Fish fern) protein is Ribulose bisphosphate carboxylase large chain (rbcL).